The following is a 243-amino-acid chain: UPF0246 protein SAK_2020 (243 aa).

It belongs to the UPF0246 family.

The polypeptide is UPF0246 protein SAK_2020 (Streptococcus agalactiae serotype Ia (strain ATCC 27591 / A909 / CDC SS700)).